Here is an 82-residue protein sequence, read N- to C-terminus: RNA-binding protein Hfq (82 aa).

Residues 11-72 (DTFLNAVRKS…ISTIAPSAPV (62 aa)) form the Sm domain.

The protein belongs to the Hfq family. As to quaternary structure, homohexamer.

RNA chaperone that binds small regulatory RNA (sRNAs) and mRNAs to facilitate mRNA translational regulation in response to envelope stress, environmental stress and changes in metabolite concentrations. Also binds with high specificity to tRNAs. The sequence is that of RNA-binding protein Hfq from Hyphomonas neptunium (strain ATCC 15444).